Reading from the N-terminus, the 559-residue chain is CTP synthase (559 aa).

Residues 1–270 (MTKFVFVTGG…DGLICDKLRL (270 aa)) are amidoligase domain. Residue serine 13 participates in CTP binding. Serine 13 is a binding site for UTP. ATP-binding positions include 14–19 (SLGKGI) and aspartate 71. Positions 71 and 144 each coordinate Mg(2+). Residues 151 to 153 (DIE), 191 to 196 (KTKPTQ), and lysine 227 each bind CTP. Residues 191 to 196 (KTKPTQ) and lysine 227 contribute to the UTP site. Residues 295–548 (TIAMVGKYVD…IKAAIDHQKS (254 aa)) form the Glutamine amidotransferase type-1 domain. Glycine 357 lines the L-glutamine pocket. The Nucleophile; for glutamine hydrolysis role is filled by cysteine 384. Residues 385-388 (LGMQ), glutamate 408, and arginine 474 each bind L-glutamine. Residues histidine 521 and glutamate 523 contribute to the active site.

This sequence belongs to the CTP synthase family. As to quaternary structure, homotetramer.

The enzyme catalyses UTP + L-glutamine + ATP + H2O = CTP + L-glutamate + ADP + phosphate + 2 H(+). The catalysed reaction is L-glutamine + H2O = L-glutamate + NH4(+). It catalyses the reaction UTP + NH4(+) + ATP = CTP + ADP + phosphate + 2 H(+). Its pathway is pyrimidine metabolism; CTP biosynthesis via de novo pathway; CTP from UDP: step 2/2. Allosterically activated by GTP, when glutamine is the substrate; GTP has no effect on the reaction when ammonia is the substrate. The allosteric effector GTP functions by stabilizing the protein conformation that binds the tetrahedral intermediate(s) formed during glutamine hydrolysis. Inhibited by the product CTP, via allosteric rather than competitive inhibition. Its function is as follows. Catalyzes the ATP-dependent amination of UTP to CTP with either L-glutamine or ammonia as the source of nitrogen. Regulates intracellular CTP levels through interactions with the four ribonucleotide triphosphates. The sequence is that of CTP synthase from Paracidovorax citrulli (strain AAC00-1) (Acidovorax citrulli).